The following is a 1027-amino-acid chain: Circadian locomoter output cycles protein kaput (1027 aa).

The bHLH domain occupies 15–65 (LCRKSRNLSEKKRRDQFNSLVNDLSALISTSSRKMDKSTVLKSTIAFLKNH). PAS domains are found at residues 88-160 (NDEY…VIEP) and 255-321 (REMS…ELRQ). Disordered regions lie at residues 377 to 402 (RKEG…ASTG), 443 to 575 (TSPA…QQLQ), 765 to 800 (QQMM…TQQQ), 869 to 911 (TINP…NNED), and 926 to 1027 (SINF…GSSQ). Residues 383 to 402 (SGNSNSITNNGSSKVIASTG) are compositionally biased toward low complexity. Residues 443–486 (TSPAVDSSPMWSASAVQPSGSCQINPLKTSRPASSYGNISSTGI) are compositionally biased toward polar residues. Composition is skewed to low complexity over residues 504-516 (SDST…SVTS) and 552-575 (QQQQ…QQLQ). The interval 780-1027 (QHNLQQQHQS…SPHTAPGSSQ (248 aa)) is implicated in the circadian rhythmicity. Low complexity-rich tracts occupy residues 871 to 909 (NPFN…QNNN) and 951 to 995 (SGSN…NQNQ). Residues 1006 to 1027 (QMSQEQSQNLFNSPHTAPGSSQ) show a composition bias toward polar residues.

In terms of assembly, efficient DNA binding requires dimerization with another bHLH protein. Forms a heterodimer with Cycle. As to expression, widely expressed. Found in head, body, and appendage fractions.

It localises to the nucleus. Functionally, circadian regulator that acts as a transcription factor and generates a rhythmic output with a period of about 24 hours. Oscillates in antiphase to the cycling observed for period (PER) and timeless (TIM). According to PubMed:9742131, reaches peak abundance within several hours of the dark-light transition at ZT0 (zeitgeber 0), whereas PubMed:9616122 describes bimodal oscillating expression with maximum at ZT5 and ZT23. Clock-cycle heterodimers activate cycling transcription of PER and TIM by binding to the E-box (5'-CACGTG-3') present in their promoters. Once induced, Period and Timeless block Clock's ability to transactivate their promoters. This is Circadian locomoter output cycles protein kaput (Clk) from Drosophila melanogaster (Fruit fly).